The sequence spans 280 residues: Nuclear egress protein 1 (280 aa).

The CCCH-type zinc-finger motif lies at 86–203 (CLTLSPYGHS…YIIFTSLTLH (118 aa)).

The protein belongs to the herpesviridae NEC1 protein family. Forms a heterohexameric complex with NEC2. Interacts with capsid vertex specific component 2/CVC2; this interaction directs the capsid to the host inner nuclear membrane to initiate budding. Post-translationally, phosphorylated at serine residues in the N-terminus. This phosphorylation regulates the localization within the inner nuclear membrane.

The protein resides in the host nucleus inner membrane. In terms of biological role, plays an essential role in virion nuclear egress, the first step of virion release from infected cell. Within the host nucleus, NEC1 interacts with the newly formed capsid through the vertexes and directs it to the inner nuclear membrane by associating with NEC2. Induces the budding of the capsid at the inner nuclear membrane as well as its envelopment into the perinuclear space. There, the NEC1/NEC2 complex promotes the fusion of the enveloped capsid with the outer nuclear membrane and the subsequent release of the viral capsid into the cytoplasm where it will reach the secondary budding sites in the host Golgi or trans-Golgi network. In Alcelaphine herpesvirus 1 (strain C500) (AlHV-1), this protein is Nuclear egress protein 1.